The chain runs to 133 residues: Osteocrin (133 aa).

The first 27 residues, 1 to 27, serve as a signal peptide directing secretion; it reads MLDWRLASAHFILAVTLTLWSSGKVLS. Arginine 132 bears the Arginine amide mark.

Belongs to the Osteocrin family. In terms of assembly, interacts with NPR3. In terms of tissue distribution, enriched in neocortical regions of the developing cerebral cortex. Not expressed in other compartments of the neocortical wall or in brain regions such as the hippocampus, striatum, mediodorsal nucleus of the thalamus and cerebellum. Also expressed in bone. In developing neonatal rib bone, present at high level in osteoblasts on bone-forming surfaces, in newly incorporated osteocytes and in some late hypertrophic chondrocytes (at protein level). In adult bone, localizes specifically to osteoblasts and young osteocytes at bone-forming sites (at protein level).

It is found in the secreted. In terms of biological role, hormone that acts as a regulator of dendritic growth in the developing cerebral cortex in response to sensory experience. Induced in the brain following membrane depolarization and inhibits dendritic branching in neurons of the developing cortex. Probably acts by binding to natriuretic peptide receptor NPR3/NPR-C, thereby preventing binding between NPR3/NPR-C and natriuretic peptides, leading to increase cGMP production. The protein is Osteocrin of Homo sapiens (Human).